A 133-amino-acid polypeptide reads, in one-letter code: MTTDTIFPPHGRLMTKLTALGPYLRKQQSKEGEFFFDCLASCISANKSPEEREFWGWWLVLTATDIGFEYRYDFGRYDAKGNWIKGTLPAKHTEAVLKTLDDFYVKLTKFVKEDCQLDLQASAELEEAVLGSA.

An essential for activity region spans residues 99-122 (TLDDFYVKLTKFVKEDCQLDLQAS).

This sequence belongs to the Crl family.

Its subcellular location is the cytoplasm. Functionally, binds to the sigma-S subunit of RNA polymerase, activating expression of sigma-S-regulated genes. Stimulates RNA polymerase holoenzyme formation and may bind to several other sigma factors, such as sigma-70 and sigma-32. The sequence is that of Sigma factor-binding protein Crl from Photobacterium profundum (strain SS9).